We begin with the raw amino-acid sequence, 65 residues long: Large ribosomal subunit protein uL29 (65 aa).

It belongs to the universal ribosomal protein uL29 family.

The polypeptide is Large ribosomal subunit protein uL29 (Mycoplasmopsis pulmonis (strain UAB CTIP) (Mycoplasma pulmonis)).